The primary structure comprises 176 residues: Translation initiation factor IF-3 (176 aa).

Belongs to the IF-3 family. As to quaternary structure, monomer.

It is found in the cytoplasm. Functionally, IF-3 binds to the 30S ribosomal subunit and shifts the equilibrium between 70S ribosomes and their 50S and 30S subunits in favor of the free subunits, thus enhancing the availability of 30S subunits on which protein synthesis initiation begins. In Streptococcus mutans serotype c (strain ATCC 700610 / UA159), this protein is Translation initiation factor IF-3.